Consider the following 191-residue polypeptide: Transcription factor FapR (191 aa).

The MaoC-like domain maps to 102–169 (GIARGHHLFA…RILVTSHVNQ (68 aa)).

The protein belongs to the FapR family.

Functionally, transcriptional factor involved in regulation of membrane lipid biosynthesis by repressing genes involved in fatty acid and phospholipid metabolism. This chain is Transcription factor FapR, found in Shouchella clausii (strain KSM-K16) (Alkalihalobacillus clausii).